Reading from the N-terminus, the 518-residue chain is MGSKELLKEEDFLGSTEDRADFDQAMFPVMETFEINDPVPKKRNGGTFCMAVMAIHLILLTAGTALLLIQVLNLQEQLQMLEMCCGNGSLAIEDKPFFSLQWAPKTHLVPRAQGLQALQAQLSWVHTSQEQLRQQFNNLTQNPELFQIKGERGSPGPKGAPGAPGIPGLPGPAAEKGEKGAAGRDGTPGVQGPQGPPGSKGEAGLQGLTGAPGKQGATGAPGPRGEKGSKGDIGLTGPKGEHGTKGDKGDLGLPGNKGDMGMKGDTGPMGSPGAQGGKGDAGKPGLPGLAGSPGVKGDQGKPGVQGVPGPQGAPGLSGAKGEPGRTGLPGPAGPPGIAGNPGIAGVKGSKGDTGIQGQKGTKGESGVPGLVGRKGDTGSPGLAGPKGEPGRVGQKGDPGMKGSSGQQGQKGEKGQKGESFQRVRIMGGTNRGRAEVYYNNEWGTICDDDWDNNDATVFCRMLGYSRGRALSSYGGGSGNIWLDNVNCRGTENSLWDCSKNSWGNHNCVHNEDAGVECS.

The Cytoplasmic portion of the chain corresponds to 1–48; it reads MGSKELLKEEDFLGSTEDRADFDQAMFPVMETFEINDPVPKKRNGGTF. A helical; Signal-anchor for type II membrane protein membrane pass occupies residues 49–69; the sequence is CMAVMAIHLILLTAGTALLLI. At 70 to 518 the chain is on the extracellular side; it reads QVLNLQEQLQ…HNEDAGVECS (449 aa). N-linked (GlcNAc...) asparagine glycosylation is found at asparagine 87 and asparagine 138. The disordered stretch occupies residues 147–426; it reads QIKGERGSPG…GESFQRVRIM (280 aa). Positions 149 to 418 constitute a Collagen-like domain; the sequence is KGERGSPGPK…QKGEKGQKGE (270 aa). A compositionally biased stretch (low complexity) spans 154–163; it reads SPGPKGAPGA. Residues 239-250 show a composition bias toward basic and acidic residues; that stretch reads KGEHGTKGDKGD. Composition is skewed to low complexity over residues 293-314 and 325-344; these read PGVK…QGAP and RTGL…PGIA. The segment covering 410 to 421 has biased composition (basic and acidic residues); the sequence is KGEKGQKGESFQ. Residues 423 to 518 enclose the SRCR domain; that stretch reads VRIMGGTNRG…HNEDAGVECS (96 aa). Disulfide bonds link cysteine 446-cysteine 507, cysteine 459-cysteine 517, and cysteine 487-cysteine 497.

Homotrimer; disulfide-linked. Trimers may assemble in larger oligomers thus resulting in the creation of a large surface capable of interacting with very large ligands. Post-translationally, N-glycosylated. As to expression, expressed in subpopulations of macrophages in the spleen and the medullary cord of lymph nodes (at protein level).

It localises to the cell membrane. Its function is as follows. Pattern recognition receptor (PRR) which binds Gram-positive and Gram-negative bacteria. Also plays a role in binding of unopsonized particles by alveolar macrophages. Binds to the secretoglobin SCGB3A2. This chain is Macrophage receptor MARCO (Marco), found in Mus musculus (Mouse).